We begin with the raw amino-acid sequence, 342 residues long: Oxygen-dependent coproporphyrinogen-III oxidase (342 aa).

Position 107 (serine 107) interacts with substrate. Positions 111 and 121 each coordinate a divalent metal cation. The Proton donor role is filled by histidine 121. Asparagine 123 to arginine 125 is a substrate binding site. 2 residues coordinate a divalent metal cation: histidine 155 and histidine 185. The important for dimerization stretch occupies residues tyrosine 277–glutamate 312.

The protein belongs to the aerobic coproporphyrinogen-III oxidase family. In terms of assembly, homodimer. Requires a divalent metal cation as cofactor.

Its subcellular location is the cytoplasm. The catalysed reaction is coproporphyrinogen III + O2 + 2 H(+) = protoporphyrinogen IX + 2 CO2 + 2 H2O. The protein operates within porphyrin-containing compound metabolism; protoporphyrin-IX biosynthesis; protoporphyrinogen-IX from coproporphyrinogen-III (O2 route): step 1/1. Its function is as follows. Involved in the heme and chlorophyll biosynthesis. Catalyzes the aerobic oxidative decarboxylation of propionate groups of rings A and B of coproporphyrinogen-III to yield the vinyl groups in protoporphyrinogen-IX. The protein is Oxygen-dependent coproporphyrinogen-III oxidase of Synechococcus sp. (strain ATCC 27144 / PCC 6301 / SAUG 1402/1) (Anacystis nidulans).